Consider the following 183-residue polypeptide: Small ribosomal subunit protein cS23y (183 aa).

Belongs to the chloroplast-specific ribosomal protein cS23 family. As to quaternary structure, part of the 30S ribosomal subunit.

It localises to the plastid. The protein resides in the chloroplast. Its function is as follows. Component of the chloroplast ribosome (chloro-ribosome), a dedicated translation machinery responsible for the synthesis of chloroplast genome-encoded proteins, including proteins of the transcription and translation machinery and components of the photosynthetic apparatus. This is Small ribosomal subunit protein cS23y from Arabidopsis thaliana (Mouse-ear cress).